Reading from the N-terminus, the 306-residue chain is Pantothenate kinase (306 aa).

90 to 97 lines the ATP pocket; it reads GSVAVGKS.

This sequence belongs to the prokaryotic pantothenate kinase family.

It is found in the cytoplasm. It carries out the reaction (R)-pantothenate + ATP = (R)-4'-phosphopantothenate + ADP + H(+). The protein operates within cofactor biosynthesis; coenzyme A biosynthesis; CoA from (R)-pantothenate: step 1/5. The chain is Pantothenate kinase from Listeria monocytogenes serotype 4a (strain HCC23).